The chain runs to 612 residues: Threonine--tRNA ligase (612 aa).

Residues 218–509 form a catalytic region; it reads DHRKLGVELG…LSEHFGGNFP (292 aa). Zn(2+) is bound by residues cysteine 310, histidine 361, and histidine 486.

The protein belongs to the class-II aminoacyl-tRNA synthetase family. As to quaternary structure, homodimer. The cofactor is Zn(2+).

Its subcellular location is the cytoplasm. It carries out the reaction tRNA(Thr) + L-threonine + ATP = L-threonyl-tRNA(Thr) + AMP + diphosphate + H(+). Functionally, catalyzes the attachment of threonine to tRNA(Thr) in a two-step reaction: L-threonine is first activated by ATP to form Thr-AMP and then transferred to the acceptor end of tRNA(Thr). Also edits incorrectly charged L-seryl-tRNA(Thr). In Helicobacter pylori (strain P12), this protein is Threonine--tRNA ligase.